The primary structure comprises 158 residues: SsrA-binding protein (158 aa).

The protein belongs to the SmpB family.

It is found in the cytoplasm. Its function is as follows. Required for rescue of stalled ribosomes mediated by trans-translation. Binds to transfer-messenger RNA (tmRNA), required for stable association of tmRNA with ribosomes. tmRNA and SmpB together mimic tRNA shape, replacing the anticodon stem-loop with SmpB. tmRNA is encoded by the ssrA gene; the 2 termini fold to resemble tRNA(Ala) and it encodes a 'tag peptide', a short internal open reading frame. During trans-translation Ala-aminoacylated tmRNA acts like a tRNA, entering the A-site of stalled ribosomes, displacing the stalled mRNA. The ribosome then switches to translate the ORF on the tmRNA; the nascent peptide is terminated with the 'tag peptide' encoded by the tmRNA and targeted for degradation. The ribosome is freed to recommence translation, which seems to be the essential function of trans-translation. The protein is SsrA-binding protein of Roseiflexus sp. (strain RS-1).